A 174-amino-acid polypeptide reads, in one-letter code: Bifunctional protein PyrR (174 aa).

Residues 97-109 (VVIVDDVLYTGRT) carry the PRPP-binding motif.

Belongs to the purine/pyrimidine phosphoribosyltransferase family. PyrR subfamily. In terms of assembly, homodimer and homohexamer; in equilibrium.

It carries out the reaction UMP + diphosphate = 5-phospho-alpha-D-ribose 1-diphosphate + uracil. Its function is as follows. Regulates transcriptional attenuation of the pyrimidine nucleotide (pyr) operon by binding in a uridine-dependent manner to specific sites on pyr mRNA. This disrupts an antiterminator hairpin in the RNA and favors formation of a downstream transcription terminator, leading to a reduced expression of downstream genes. In terms of biological role, also displays a weak uracil phosphoribosyltransferase activity which is not physiologically significant. The protein is Bifunctional protein PyrR of Macrococcus caseolyticus (strain JCSC5402) (Macrococcoides caseolyticum).